We begin with the raw amino-acid sequence, 219 residues long: Protein-L-isoaspartate O-methyltransferase (219 aa).

The active site involves S66.

Belongs to the methyltransferase superfamily. L-isoaspartyl/D-aspartyl protein methyltransferase family.

The protein localises to the cytoplasm. It carries out the reaction [protein]-L-isoaspartate + S-adenosyl-L-methionine = [protein]-L-isoaspartate alpha-methyl ester + S-adenosyl-L-homocysteine. In terms of biological role, catalyzes the methyl esterification of L-isoaspartyl residues in peptides and proteins that result from spontaneous decomposition of normal L-aspartyl and L-asparaginyl residues. It plays a role in the repair and/or degradation of damaged proteins. The polypeptide is Protein-L-isoaspartate O-methyltransferase (Xanthobacter autotrophicus (strain ATCC BAA-1158 / Py2)).